The primary structure comprises 103 residues: Small ribosomal subunit protein uS10 (103 aa).

The protein belongs to the universal ribosomal protein uS10 family. In terms of assembly, part of the 30S ribosomal subunit.

Functionally, involved in the binding of tRNA to the ribosomes. The protein is Small ribosomal subunit protein uS10 of Thioalkalivibrio sulfidiphilus (strain HL-EbGR7).